A 932-amino-acid polypeptide reads, in one-letter code: Glycine dehydrogenase (decarboxylating) (932 aa).

Lys-685 is modified (N6-(pyridoxal phosphate)lysine).

The protein belongs to the GcvP family. As to quaternary structure, the glycine cleavage system is composed of four proteins: P, T, L and H. Pyridoxal 5'-phosphate serves as cofactor.

The catalysed reaction is N(6)-[(R)-lipoyl]-L-lysyl-[glycine-cleavage complex H protein] + glycine + H(+) = N(6)-[(R)-S(8)-aminomethyldihydrolipoyl]-L-lysyl-[glycine-cleavage complex H protein] + CO2. In terms of biological role, the glycine cleavage system catalyzes the degradation of glycine. The P protein binds the alpha-amino group of glycine through its pyridoxal phosphate cofactor; CO(2) is released and the remaining methylamine moiety is then transferred to the lipoamide cofactor of the H protein. This chain is Glycine dehydrogenase (decarboxylating), found in Brucella canis (strain ATCC 23365 / NCTC 10854 / RM-666).